Here is a 548-residue protein sequence, read N- to C-terminus: Chaperonin GroEL (548 aa).

ATP is bound by residues 29 to 32 (TMGP), lysine 50, 86 to 90 (DGTTT), glycine 414, 478 to 480 (NAA), and aspartate 494.

It belongs to the chaperonin (HSP60) family. Forms a cylinder of 14 subunits composed of two heptameric rings stacked back-to-back. Interacts with the co-chaperonin GroES.

The protein localises to the cytoplasm. The catalysed reaction is ATP + H2O + a folded polypeptide = ADP + phosphate + an unfolded polypeptide.. Together with its co-chaperonin GroES, plays an essential role in assisting protein folding. The GroEL-GroES system forms a nano-cage that allows encapsulation of the non-native substrate proteins and provides a physical environment optimized to promote and accelerate protein folding. In terms of biological role, may play a protective role against the defense mechanisms generated by the infected macrophages. The protein is Chaperonin GroEL of Legionella pneumophila.